A 47-amino-acid chain; its full sequence is uncharacterized protein (47 aa).

This is an uncharacterized protein from Treponema pallidum (strain Nichols).